A 403-amino-acid chain; its full sequence is Tryptophan synthase beta chain 1 (403 aa).

An N6-(pyridoxal phosphate)lysine modification is found at Lys96.

Belongs to the TrpB family. In terms of assembly, tetramer of two alpha and two beta chains. The cofactor is pyridoxal 5'-phosphate.

The enzyme catalyses (1S,2R)-1-C-(indol-3-yl)glycerol 3-phosphate + L-serine = D-glyceraldehyde 3-phosphate + L-tryptophan + H2O. Its pathway is amino-acid biosynthesis; L-tryptophan biosynthesis; L-tryptophan from chorismate: step 5/5. Its function is as follows. The beta subunit is responsible for the synthesis of L-tryptophan from indole and L-serine. The protein is Tryptophan synthase beta chain 1 (trpB1) of Wolinella succinogenes (strain ATCC 29543 / DSM 1740 / CCUG 13145 / JCM 31913 / LMG 7466 / NCTC 11488 / FDC 602W) (Vibrio succinogenes).